The following is a 200-amino-acid chain: LHFPL tetraspan subfamily member 6 protein (200 aa).

Positions Met-1 to Ser-23 are cleaved as a signal peptide. Helical transmembrane passes span Ile-84 to Leu-104, Gly-123 to Trp-143, and Ile-166 to Trp-186.

It belongs to the LHFP family.

The protein resides in the membrane. This Mus musculus (Mouse) protein is LHFPL tetraspan subfamily member 6 protein.